The primary structure comprises 454 residues: MLRSLWSGVSGMQAHQVALDVESNNIANVNTTGFKYSRASFVDMISQTKLIATSPHKGGLGGQNDVSVGLGVNVNSTTKVFSQGSTQNTDVKTDLAIEGDGFFIISPDRGKTQNFTRDGEFLFDANGNLVTNGGYVVQGWMKDDLRNAEKISEDDFFRVDTTKPIQNIQIDPAMMMPARASSNISLRANLNAGRHVDQVANVFGLGSTTKTPVDGINPIYDSHDNLTQKAEDFGALFTQSGDAIGLTENQGIWVSYKTSEMVNDIEATSGESSIEINHTRISFTNDSAASGISSVVAAQNAINALKQKTGVEAFVDNGMLRLQNKNNMDGDAEVKNIRITADGTGAFANFIEGDSDITAFRYRYTTSASPDSGTGQFRTTEDLRALIQYDANLIKDPSQAYTDSTASVSVKFNKYGMLEIQNKDNGDELKQDLNIFVSGYSSENSTNNFSEQDG.

It belongs to the flagella basal body rod proteins family.

The protein localises to the bacterial flagellum basal body. A flexible structure which links the flagellar filament to the drive apparatus in the basal body. Absence of the gene leads to absence of the hook protein, lack of the flagellar filament and thus loss of mobility. Approximately wild-type levels of the flagellar subunits are still produced and accumulate mostly in the cytosol. The polypeptide is Flagellar hook protein FlgE (flgE) (Helicobacter mustelae).